A 507-amino-acid chain; its full sequence is Protein disulfide-isomerase (507 aa).

An N-terminal signal peptide occupies residues 1–20; sequence MASMVSFCFLLLFLAFFASS. Residues 21 to 144 enclose the Thioredoxin 1 domain; sequence FNEIYAEESE…IVDYLKKQSG (124 aa). Catalysis depends on nucleophile residues Cys62 and Cys65. A disulfide bridge links Cys62 with Cys65. N-linked (GlcNAc...) asparagine glycans are attached at residues Asn181 and Asn278. The 121-residue stretch at 365–485 folds into the Thioredoxin 2 domain; the sequence is YRKSEPIPEH…FIEFIEKNRE (121 aa). Catalysis depends on nucleophile residues Cys407 and Cys410. Cys407 and Cys410 form a disulfide bridge. A disordered region spans residues 484 to 507; the sequence is REKSSKKESIVKDDQTDSETKAEL. Residues 504–507 carry the Prevents secretion from ER motif; that stretch reads KAEL.

It belongs to the protein disulfide isomerase family.

It is found in the endoplasmic reticulum lumen. The catalysed reaction is Catalyzes the rearrangement of -S-S- bonds in proteins.. Functionally, participates in the folding of proteins containing disulfide bonds, may be involved in glycosylation, prolyl hydroxylation and triglyceride transfer. The sequence is that of Protein disulfide-isomerase (PDI) from Datisca glomerata (Durango root).